The chain runs to 412 residues: Tyrosine--tRNA ligase 1 (412 aa).

Tyr41 lines the L-tyrosine pocket. Positions Ala46 to His55 match the 'HIGH' region motif. L-tyrosine is bound by residues Tyr174 and Gln178. Residues Lys234 to Ser238 carry the 'KMSKS' region motif. Lys237 lines the ATP pocket. The 64-residue stretch at Leu348–Glu411 folds into the S4 RNA-binding domain.

It belongs to the class-I aminoacyl-tRNA synthetase family. TyrS type 1 subfamily. As to quaternary structure, homodimer.

It localises to the cytoplasm. The enzyme catalyses tRNA(Tyr) + L-tyrosine + ATP = L-tyrosyl-tRNA(Tyr) + AMP + diphosphate + H(+). In terms of biological role, catalyzes the attachment of tyrosine to tRNA(Tyr) in a two-step reaction: tyrosine is first activated by ATP to form Tyr-AMP and then transferred to the acceptor end of tRNA(Tyr). The sequence is that of Tyrosine--tRNA ligase 1 from Pseudomonas aeruginosa (strain ATCC 15692 / DSM 22644 / CIP 104116 / JCM 14847 / LMG 12228 / 1C / PRS 101 / PAO1).